Reading from the N-terminus, the 251-residue chain is NADPH-dependent oxidoreductase (251 aa).

The protein belongs to the flavin oxidoreductase frp family. The cofactor is FMN.

Functionally, reduces FMN, organic nitro compounds and disulfide DTNB. Involved in maintenance of the cellular redox state and the disulfide stress response. The sequence is that of NADPH-dependent oxidoreductase (nfrA) from Staphylococcus aureus (strain USA300).